Reading from the N-terminus, the 161-residue chain is 2-C-methyl-D-erythritol 2,4-cyclodiphosphate synthase (161 aa).

A divalent metal cation is bound by residues D11 and H13. Residues D11–H13 and H37–S38 each bind 4-CDP-2-C-methyl-D-erythritol 2-phosphate. H45 provides a ligand contact to a divalent metal cation. Residues D59–G61 and T135–E138 contribute to the 4-CDP-2-C-methyl-D-erythritol 2-phosphate site.

The protein belongs to the IspF family. As to quaternary structure, homotrimer. The cofactor is a divalent metal cation.

It catalyses the reaction 4-CDP-2-C-methyl-D-erythritol 2-phosphate = 2-C-methyl-D-erythritol 2,4-cyclic diphosphate + CMP. It functions in the pathway isoprenoid biosynthesis; isopentenyl diphosphate biosynthesis via DXP pathway; isopentenyl diphosphate from 1-deoxy-D-xylulose 5-phosphate: step 4/6. In terms of biological role, involved in the biosynthesis of isopentenyl diphosphate (IPP) and dimethylallyl diphosphate (DMAPP), two major building blocks of isoprenoid compounds. Catalyzes the conversion of 4-diphosphocytidyl-2-C-methyl-D-erythritol 2-phosphate (CDP-ME2P) to 2-C-methyl-D-erythritol 2,4-cyclodiphosphate (ME-CPP) with a corresponding release of cytidine 5-monophosphate (CMP). The sequence is that of 2-C-methyl-D-erythritol 2,4-cyclodiphosphate synthase from Acaryochloris marina (strain MBIC 11017).